A 176-amino-acid polypeptide reads, in one-letter code: ADP-ribosylation factor-like protein 8d (176 aa).

GTP-binding positions include 21-26 (NSGKTS), 40-43 (MIPT), 62-66 (DLGGQ), and 121-124 (NKID).

This sequence belongs to the small GTPase superfamily. Arf family. Interacts with tubulin.

Its subcellular location is the late endosome membrane. The protein resides in the lysosome membrane. It localises to the cytoplasm. It is found in the cytoskeleton. The protein localises to the spindle. In terms of biological role, may play a role in lysosome motility. May play a role in chromosome segregation. The sequence is that of ADP-ribosylation factor-like protein 8d from Arabidopsis thaliana (Mouse-ear cress).